We begin with the raw amino-acid sequence, 487 residues long: MKNILKLSIAEMHDNLKKREFSAVELTKLHIEAVNNEKLNAFITKTPEIALSAAEKADYIFTHQKENLTPLTGIPVGIKDLFCTKHVRTTACSNILKNFTPQYDSTVTKRLLDNGAVMLGKLNMDEFAMGSSNSNSCFGHVKNPWVRADGVEVVPGGSSGGSSAAVAGFLCAGALGSDTGGSVRQPAALCGIVGLKPTYGRCSRFGMIAFASSLDQAGVLTRTVEDASLMLQSICGYDIQDSTSANIAVPKFSESITHTIKGKRIGIPKEYELSGKYQEYTEVSEMWAKGIQYLKDEGAEIIEISLPHTSYALPVYYIICSAEASSNLARYDGIRYGARISSDDINEMYELTRGHNFGTEVKRRILIGAYVLSSGYYDAYYNKAQRIRHLVINDFVESFKKIDYILTPTTPKEAFAINEQLDTLTMYLNDVFTVPASLAGLPAISVPIGLSKSNLPLSLQVIGNYYDEGGILNVASIIEKHTGKILK.

Residues K79 and S158 each act as charge relay system in the active site. Catalysis depends on S182, which acts as the Acyl-ester intermediate.

The protein belongs to the amidase family. GatA subfamily. In terms of assembly, heterotrimer of A, B and C subunits.

It carries out the reaction L-glutamyl-tRNA(Gln) + L-glutamine + ATP + H2O = L-glutaminyl-tRNA(Gln) + L-glutamate + ADP + phosphate + H(+). In terms of biological role, allows the formation of correctly charged Gln-tRNA(Gln) through the transamidation of misacylated Glu-tRNA(Gln) in organisms which lack glutaminyl-tRNA synthetase. The reaction takes place in the presence of glutamine and ATP through an activated gamma-phospho-Glu-tRNA(Gln). The protein is Glutamyl-tRNA(Gln) amidotransferase subunit A of Ehrlichia chaffeensis (strain ATCC CRL-10679 / Arkansas).